The sequence spans 342 residues: Manganese-dependent ADP-ribose/CDP-alcohol diphosphatase (342 aa).

Residues Asp18, Gln20, Asp67, Asn103, His239, His276, and His278 each coordinate Zn(2+).

This sequence belongs to the ADPRibase-Mn family. Monomer. It depends on Mg(2+) as a cofactor.

The catalysed reaction is CDP-choline + H2O = phosphocholine + CMP + 2 H(+). It catalyses the reaction ADP-D-ribose + H2O = D-ribose 5-phosphate + AMP + 2 H(+). It carries out the reaction CDP-glycerol + H2O = sn-glycerol 3-phosphate + CMP + 2 H(+). Its function is as follows. Hydrolyzes ADP-ribose, IDP-ribose, CDP-glycerol, CDP-choline and CDP-ethanolamine, but not other non-reducing ADP-sugars or CDP-glucose. The protein is Manganese-dependent ADP-ribose/CDP-alcohol diphosphatase (adprm) of Xenopus tropicalis (Western clawed frog).